The primary structure comprises 933 residues: Phosphoenolpyruvate carboxylase (933 aa).

Residues histidine 158 and lysine 592 contribute to the active site.

It belongs to the PEPCase type 1 family. The cofactor is Mg(2+).

It catalyses the reaction oxaloacetate + phosphate = phosphoenolpyruvate + hydrogencarbonate. Forms oxaloacetate, a four-carbon dicarboxylic acid source for the tricarboxylic acid cycle. This is Phosphoenolpyruvate carboxylase from Nitrosomonas europaea (strain ATCC 19718 / CIP 103999 / KCTC 2705 / NBRC 14298).